Consider the following 264-residue polypeptide: tRNA pseudouridine synthase A (264 aa).

The active-site Nucleophile is the Asp56. Tyr114 is a substrate binding site.

It belongs to the tRNA pseudouridine synthase TruA family. Homodimer.

It carries out the reaction uridine(38/39/40) in tRNA = pseudouridine(38/39/40) in tRNA. In terms of biological role, formation of pseudouridine at positions 38, 39 and 40 in the anticodon stem and loop of transfer RNAs. The protein is tRNA pseudouridine synthase A of Buchnera aphidicola subsp. Baizongia pistaciae (strain Bp).